We begin with the raw amino-acid sequence, 101 residues long: MAKTSMKAREAKRAQLVAKFAEKRAALKAIIASPASSDEDRWDAVLKLQALPRDSSASRQRNRCNQTGRPHGFLRKFGLSRIKLREATMRGEVPGLRKASW.

Belongs to the universal ribosomal protein uS14 family. In terms of assembly, part of the 30S ribosomal subunit. Contacts proteins S3 and S10.

Binds 16S rRNA, required for the assembly of 30S particles and may also be responsible for determining the conformation of the 16S rRNA at the A site. The chain is Small ribosomal subunit protein uS14 from Shewanella sp. (strain ANA-3).